A 238-amino-acid polypeptide reads, in one-letter code: Thiamine import ATP-binding protein ThiQ (238 aa).

Residues 1–234 enclose the ABC transporter domain; sequence MSSTALAVKG…RDIAAINRFL (234 aa). Position 36–43 (36–43) interacts with ATP; sequence GASGSGKS.

This sequence belongs to the ABC transporter superfamily. Thiamine importer (TC 3.A.1.19.1) family. The complex is composed of two ATP-binding proteins (ThiQ), two transmembrane proteins (ThiP) and a solute-binding protein (ThiB).

It localises to the cell inner membrane. It carries out the reaction thiamine(out) + ATP + H2O = thiamine(in) + ADP + phosphate + H(+). Part of the ABC transporter complex ThiBPQ involved in thiamine import. Responsible for energy coupling to the transport system. In Rhizobium meliloti (strain 1021) (Ensifer meliloti), this protein is Thiamine import ATP-binding protein ThiQ.